A 167-amino-acid chain; its full sequence is NADH-quinone oxidoreductase subunit B (167 aa).

The [4Fe-4S] cluster site is built by cysteine 40, cysteine 41, cysteine 105, and cysteine 135.

Belongs to the complex I 20 kDa subunit family. NDH-1 is composed of 14 different subunits. Subunits NuoB, C, D, E, F, and G constitute the peripheral sector of the complex. It depends on [4Fe-4S] cluster as a cofactor.

It is found in the cell inner membrane. It carries out the reaction a quinone + NADH + 5 H(+)(in) = a quinol + NAD(+) + 4 H(+)(out). Functionally, NDH-1 shuttles electrons from NADH, via FMN and iron-sulfur (Fe-S) centers, to quinones in the respiratory chain. The immediate electron acceptor for the enzyme in this species is believed to be ubiquinone. Couples the redox reaction to proton translocation (for every two electrons transferred, four hydrogen ions are translocated across the cytoplasmic membrane), and thus conserves the redox energy in a proton gradient. The sequence is that of NADH-quinone oxidoreductase subunit B from Magnetococcus marinus (strain ATCC BAA-1437 / JCM 17883 / MC-1).